Reading from the N-terminus, the 383-residue chain is uncharacterized protein (383 aa).

Residues 6–26 (LFLFSCLYFIGGNLKALVLGI) traverse the membrane as a helical segment. Positions 131–303 (YKKLKNLGFN…LAMVLLNNKY (173 aa)) constitute an ATP-grasp domain.

Its subcellular location is the membrane. This is an uncharacterized protein from Methanocaldococcus jannaschii (strain ATCC 43067 / DSM 2661 / JAL-1 / JCM 10045 / NBRC 100440) (Methanococcus jannaschii).